We begin with the raw amino-acid sequence, 458 residues long: 5-hydroxytryptamine receptor 2C (458 aa).

Residues 1–32 form the signal peptide; sequence MVNLRKAVHSFLVHLIGLLVWQCDISVSPVAA. Over 33–55 the chain is Extracellular; it reads LVTDIFNTSDGGRFKFPDGVQNW. The helical transmembrane segment at 56–80 threads the bilayer; it reads PALSIVIIIILTIGGNILVIMAVSL. The Cytoplasmic portion of the chain corresponds to 81 to 86; sequence EKKLHN. The helical transmembrane segment at 87–111 threads the bilayer; it reads ATNYFLMSLAIADMLVGLLVMPLSL. Topologically, residues 112–128 are extracellular; that stretch reads LAILYDYVWPLPRYLCP. C127 and C207 are joined by a disulfide. Residues 129–151 form a helical membrane-spanning segment; sequence VWISLDVLFSTASIMHLCAISLD. T139 is a binding site for ergotamine. A DRY motif; important for ligand-induced conformation changes motif is present at residues 151–153; sequence DRY. The Cytoplasmic portion of the chain corresponds to 152 to 167; that stretch reads RYVAIRNPVEHSRFNS. The helical transmembrane segment at 168–189 threads the bilayer; sequence RTKAIMKIAIVWAISIGVSVPI. Residues 190–213 lie on the Extracellular side of the membrane; sequence PVIGLRDEEKVFVNNTTCVLNDPN. N-linked (GlcNAc...) asparagine glycans are attached at residues N203 and N204. L209 provides a ligand contact to ergotamine. Residues 214–236 form a helical membrane-spanning segment; it reads FVLIGSFVAFFIPLTIMVITYCL. Topologically, residues 237–311 are cytoplasmic; sequence TIHVLRRQAL…AINNERKASK (75 aa). Positions 272 to 301 are disordered; sequence TEEENSANPNQDSNPRRRKKKERRPRGTMQ. Residues 287 to 297 show a composition bias toward basic residues; sequence RRRKKKERRPR. A helical transmembrane segment spans residues 312–336; the sequence is VLGIVFFVFLVMWCPFFITNILSVL. The cysteines at positions 337 and 341 are disulfide-linked. Residues 337-347 are Extracellular-facing; it reads CGKACNQKLME. Residues 348–370 form a helical membrane-spanning segment; sequence KLLNVFVWIGYVCSGINPLVYTL. The NPxxY motif; important for ligand-induced conformation changes and signaling signature appears at 364 to 368; sequence NPLVY. At 371-458 the chain is on the cytoplasmic side; the sequence is FNKIYRRAFS…SVVSERISSV (88 aa). A PDZ-binding motif is present at residues 456–458; it reads SSV.

Belongs to the G-protein coupled receptor 1 family. As to quaternary structure, interacts with MPDZ. Interacts with ARRB2. Interacts with MPP3; this interaction stabilizes the receptor at the plasma membrane and prevents the desensitization of the HTR2C receptor-mediated calcium response.

The protein resides in the cell membrane. In terms of biological role, G-protein coupled receptor for 5-hydroxytryptamine (serotonin). Also functions as a receptor for various drugs and psychoactive substances, including ergot alkaloid derivatives, 1-2,5,-dimethoxy-4-iodophenyl-2-aminopropane (DOI) and lysergic acid diethylamide (LSD). Ligand binding causes a conformation change that triggers signaling via guanine nucleotide-binding proteins (G proteins) and modulates the activity of downstream effectors. HTR2C is coupled to G(q)/G(11) G alpha proteins and activates phospholipase C-beta, releasing diacylglycerol (DAG) and inositol 1,4,5-trisphosphate (IP3) second messengers that modulate the activity of phosphatidylinositol 3-kinase and promote the release of Ca(2+) ions from intracellular stores, respectively. Beta-arrestin family members inhibit signaling via G proteins and mediate activation of alternative signaling pathways. Regulates neuronal activity via the activation of short transient receptor potential calcium channels in the brain, and thereby modulates the activation of pro-opiomelanocortin neurons and the release of CRH that then regulates the release of corticosterone. Plays a role in the regulation of appetite and eating behavior, responses to anxiogenic stimuli and stress. Plays a role in insulin sensitivity and glucose homeostasis. This chain is 5-hydroxytryptamine receptor 2C, found in Canis lupus familiaris (Dog).